Consider the following 653-residue polypeptide: Beta-galactosidase (653 aa).

Residues 1–22 form the signal peptide; it reads MPGVVRLLALLLVPLLLGSARG. A propeptide spanning residues 23–27 is cleaved from the precursor; the sequence is LHNAT. N-linked (GlcNAc...) asparagine glycosylation occurs at asparagine 25. Tyrosine 82 provides a ligand contact to substrate. Residue asparagine 96 is glycosylated (N-linked (GlcNAc...) asparagine). Substrate is bound by residues glutamate 128 and asparagine 186. Glutamate 187 (proton donor) is an active-site residue. The cysteines at positions 194 and 229 are disulfide-linked. Asparagine 246 carries N-linked (GlcNAc...) asparagine glycosylation. Catalysis depends on glutamate 267, which acts as the Nucleophile. Tyrosine 332 is a binding site for substrate. Asparagine 463, asparagine 497, and asparagine 554 each carry an N-linked (GlcNAc...) asparagine glycan. Cysteine 625 and cysteine 633 are joined by a disulfide.

The protein belongs to the glycosyl hydrolase 35 family. Homodimer. May form higher multimers.

It is found in the lysosome. It carries out the reaction Hydrolysis of terminal non-reducing beta-D-galactose residues in beta-D-galactosides.. Its function is as follows. Cleaves beta-linked terminal galactosyl residues from gangliosides, glycoproteins, and glycosaminoglycans. This Bos taurus (Bovine) protein is Beta-galactosidase (GLB1).